A 179-amino-acid polypeptide reads, in one-letter code: MSSRILTSDVIGIDALLHDHHAVLAKSTGGAVAVFANNAPAFYAVTPARMAELLALEEKLSHPGSDVALDAQFYEEPETAHVAIPCGKFAMYPAWQPDADFQRQAALWGVALRDPVTAEELAAFIAYWQAEGKVFHHIQWQQKLARSVQISRSSNGGMPQRDINSVSEPDNHIPPGFRG.

Polar residues predominate over residues 151 to 168 (SRSSNGGMPQRDINSVSE). Positions 151-179 (SRSSNGGMPQRDINSVSEPDNHIPPGFRG) are disordered.

Belongs to the DnaT family. In terms of assembly, homooligomerizes. Interacts with PriB. Component of the replication restart primosome. Primosome assembly occurs via a 'hand-off' mechanism. PriA binds to replication forks, subsequently PriB then DnaT bind; DnaT then displaces ssDNA to generate the helicase loading substrate.

Functionally, involved in the restart of stalled replication forks, which reloads the replicative helicase on sites other than the origin of replication. Can function in multiple replication restart pathways. Displaces ssDNA from a PriB-ssDNA complex. Probably forms a spiral filament on ssDNA. The polypeptide is Replication restart protein DnaT (Salmonella arizonae (strain ATCC BAA-731 / CDC346-86 / RSK2980)).